A 64-amino-acid chain; its full sequence is Large ribosomal subunit protein bL35 (64 aa).

Over residues 1–22 (MPKMKSHTGMGKRVRVTGKGKI) the composition is skewed to basic residues. Residues 1-28 (MPKMKSHTGMGKRVRVTGKGKIVKQQAG) are disordered.

This sequence belongs to the bacterial ribosomal protein bL35 family.

This Salinispora tropica (strain ATCC BAA-916 / DSM 44818 / JCM 13857 / NBRC 105044 / CNB-440) protein is Large ribosomal subunit protein bL35.